The primary structure comprises 72 residues: Cytochrome c oxidase subunit 8C, mitochondrial (72 aa).

Residues 1–29 (MSRLLQFCSSLLRHRVVLFSKPGHSGRLS) constitute a mitochondrion transit peptide. Over 30–40 (HSESPQNQVLT) the chain is Mitochondrial matrix. A helical membrane pass occupies residues 41–64 (PTESVVGIVVFFATFFIPAAYVMS). At 65–72 (NLKFFKGE) the chain is on the mitochondrial intermembrane side.

This sequence belongs to the cytochrome c oxidase VIII family. Component of the cytochrome c oxidase (complex IV, CIV), a multisubunit enzyme composed of 14 subunits. The complex is composed of a catalytic core of 3 subunits MT-CO1, MT-CO2 and MT-CO3, encoded in the mitochondrial DNA, and 11 supernumerary subunits COX4I, COX5A, COX5B, COX6A, COX6B, COX6C, COX7A, COX7B, COX7C, COX8 and NDUFA4, which are encoded in the nuclear genome. The complex exists as a monomer or a dimer and forms supercomplexes (SCs) in the inner mitochondrial membrane with NADH-ubiquinone oxidoreductase (complex I, CI) and ubiquinol-cytochrome c oxidoreductase (cytochrome b-c1 complex, complex III, CIII), resulting in different assemblies (supercomplex SCI(1)III(2)IV(1) and megacomplex MCI(2)III(2)IV(2)).

The protein resides in the mitochondrion inner membrane. Its pathway is energy metabolism; oxidative phosphorylation. In terms of biological role, component of the cytochrome c oxidase, the last enzyme in the mitochondrial electron transport chain which drives oxidative phosphorylation. The respiratory chain contains 3 multisubunit complexes succinate dehydrogenase (complex II, CII), ubiquinol-cytochrome c oxidoreductase (cytochrome b-c1 complex, complex III, CIII) and cytochrome c oxidase (complex IV, CIV), that cooperate to transfer electrons derived from NADH and succinate to molecular oxygen, creating an electrochemical gradient over the inner membrane that drives transmembrane transport and the ATP synthase. Cytochrome c oxidase is the component of the respiratory chain that catalyzes the reduction of oxygen to water. Electrons originating from reduced cytochrome c in the intermembrane space (IMS) are transferred via the dinuclear copper A center (CU(A)) of subunit 2 and heme A of subunit 1 to the active site in subunit 1, a binuclear center (BNC) formed by heme A3 and copper B (CU(B)). The BNC reduces molecular oxygen to 2 water molecules using 4 electrons from cytochrome c in the IMS and 4 protons from the mitochondrial matrix. In Rattus norvegicus (Rat), this protein is Cytochrome c oxidase subunit 8C, mitochondrial (Cox8c).